We begin with the raw amino-acid sequence, 349 residues long: MAFLRKVNQVLLLLLVLTLCGILYKKVHKGAVLKDKADVDSESPEDMEEEIPVVICAAAGRMGAAMAAINSIYSNTDANLVFYVVGLRSTLPRIRKWIEHSKLREINFKIVEFNPTVLKGKIRPDSSRPELLQPLNFVRFYLPLLVHQHEKVIYLDDDVIVQGDIQELYDTTLALGHAAAFSDDCDLPSAQDIHRLVGLQNTYMGYLDYRKKTIKDLGISPSTCSFNPGVIVANMTEWKHQRITKQLEKWMQKNVEENLYSSSLGGGVATSPMLIVFHGKYSTINPLWHIRHLGWNPDARYSEHFLQEAKLLHWNGRHKPWDFPSVHNDLWESWFVPDPAGIFKLHHNR.

At 1–6 (MAFLRK) the chain is on the cytoplasmic side. A helical; Signal-anchor for type II membrane protein membrane pass occupies residues 7 to 24 (VNQVLLLLLVLTLCGILY). Over 25–349 (KKVHKGAVLK…AGIFKLHHNR (325 aa)) the chain is Lumenal. An N-linked (GlcNAc...) asparagine glycan is attached at Asn-234.

It belongs to the glycosyltransferase 8 family.

It localises to the membrane. This chain is Glycosyltransferase 8 domain-containing protein 2 (Glt8d2), found in Mus musculus (Mouse).